We begin with the raw amino-acid sequence, 371 residues long: Phospholipid-transporting ATPase accessory subunit ivn1 (371 aa).

Topologically, residues 1–39 (MSQTEIVKKPKHKRFKRPDKSRFVQQTLPAWQFIFTPWT) are cytoplasmic. The chain crosses the membrane as a helical span at residues 40–60 (VLPLLFLLGIVFAPLGAGMFV). The Extracellular portion of the chain corresponds to 61–325 (ASRRVKELRI…STTSVIGGKN (265 aa)). Intrachain disulfides connect Cys-75/Cys-111 and Cys-166/Cys-181. The N-linked (GlcNAc...) asparagine glycan is linked to Asn-99. N-linked (GlcNAc...) asparagine glycans are attached at residues Asn-190, Asn-212, Asn-216, Asn-233, Asn-284, and Asn-297. The chain crosses the membrane as a helical span at residues 326 to 346 (YFLGILYFVIGGLCAASGVIL). The Cytoplasmic segment spans residues 347–371 (SIACLIKPRRVGDPRYLSWNRGKSS).

Belongs to the CDC50/LEM3 family.

The protein localises to the endoplasmic reticulum membrane. Functionally, accessory component of a P4-ATPase flippase complex which catalyzes the hydrolysis of ATP coupled to the transport of aminophospholipids from the lumenal to the cytosolic leaflet of membranes and ensures the maintenance of asymmetric distribution of phospholipids. The protein is Phospholipid-transporting ATPase accessory subunit ivn1 (ivn1) of Schizosaccharomyces pombe (strain 972 / ATCC 24843) (Fission yeast).